A 985-amino-acid chain; its full sequence is Eukaryotic translation initiation factor 4E transporter (985 aa).

The interval M1 to S24 is disordered. The residue at position 5 (S5) is a Phosphoserine. The YXXXXLphi motif motif lies at Y30 to L36. 6 positions are modified to phosphoserine: S74, S78, S115, S120, S136, and S138. The interval V131–I161 is interaction with CSDE1. The short motif at R195–N211 is the Nuclear localization signal element. The tract at residues R208 to S230 is disordered. Residues P219 to D240 form an interaction with DDX6 region. Phosphoserine is present on residues S301, S345, S353, and S374. K410 participates in a covalent cross-link: Glycyl lysine isopeptide (Lys-Gly) (interchain with G-Cter in SUMO2). S417 bears the Phosphoserine mark. A Nuclear export signal motif is present at residues V438–V447. The interaction with LSM14A stretch occupies residues D448–T490. K486 bears the N6-acetyllysine mark. Phosphoserine occurs at positions 513, 564, and 587. The Nuclear export signal motif lies at I613–V638. 2 disordered regions span residues Q664 to S693 and E707 to P803. S693 is subject to Phosphoserine. The segment at S695–K713 is interaction with PATL1. Composition is skewed to basic and acidic residues over residues E707–A717 and D725–E735. Residues E736–S746 show a composition bias toward low complexity. At S752 the chain carries Phosphoserine. The span at T754–R776 shows a compositional bias: polar residues. 2 positions are modified to phosphoserine: S920 and S951. The segment at Q922–V953 is disordered. The segment at Q940–Q985 is interaction with LSM14A.

It belongs to the 4E-T/EIF4E-T family. In terms of assembly, interacts (via YXXXXLphi motif) with EIF4E. Interacts (via YXXXXLphi motif) with EIF4E2. Interacts with DDX6. Interacts with CSDE1/UNR. Interacts with CNOT1; promoting association with the CCR4-NOT complex. Interacts with LSM14A; promoting EIF4ENIF1 localization to P-bodies. Interacts with PATL1. Interacts with importin beta only in the presence of importin alpha, suggesting a direct interaction with importin alpha. Interacts with APOBEC3G in an RNA-dependent manner. Phosphorylation by MAPK8/JNK1 and or MAPK9/JNK2 in response to oxidative stress promotes P-body assembly. Phosphorylated during meiotic maturation. As to expression, widely expressed.

It localises to the cytoplasm. It is found in the P-body. Its subcellular location is the nucleus. The protein localises to the PML body. The protein resides in the nucleus speckle. In terms of biological role, EIF4E-binding protein that regulates translation and stability of mRNAs in processing bodies (P-bodies). Plays a key role in P-bodies to coordinate the storage of translationally inactive mRNAs in the cytoplasm and prevent their degradation. Acts as a binding platform for multiple RNA-binding proteins: promotes deadenylation of mRNAs via its interaction with the CCR4-NOT complex, and blocks decapping via interaction with eIF4E (EIF4E and EIF4E2), thereby protecting deadenylated and repressed mRNAs from degradation. Component of a multiprotein complex that sequesters and represses translation of proneurogenic factors during neurogenesis. Promotes miRNA-mediated translational repression. Required for the formation of P-bodies. Involved in mRNA translational repression mediated by the miRNA effector TNRC6B by protecting TNRC6B-targeted mRNAs from decapping and subsequent decay. Also acts as a nucleoplasmic shuttling protein, which mediates the nuclear import of EIF4E and DDX6 by a piggy-back mechanism. The chain is Eukaryotic translation initiation factor 4E transporter from Homo sapiens (Human).